Consider the following 414-residue polypeptide: Serine-type anaerobic sulfatase-maturating enzyme (414 aa).

The Radical SAM core domain occupies 5–250 (TYAPFAKPLY…LCTIFDEWVK (246 aa)). [4Fe-4S] cluster is bound by residues C24 and C28. Residue Y30 participates in S-adenosyl-L-methionine binding. [4Fe-4S] cluster is bound at residue C31. The S-adenosyl-L-methionine site is built by G76, S131, and R143. [4Fe-4S] cluster-binding residues include C276, C282, and C297. D298 functions as the Proton acceptor in the catalytic mechanism. [4Fe-4S] cluster is bound by residues C339, C342, C348, C352, and C371.

This sequence belongs to the radical SAM superfamily. Anaerobic sulfatase-maturating enzyme family. [4Fe-4S] cluster serves as cofactor.

The enzyme catalyses L-seryl-[sulfatase] + S-adenosyl-L-methionine = 3-oxo-L-alanyl-[sulfatase] + 5'-deoxyadenosine + L-methionine + H(+). The protein operates within protein modification; sulfatase oxidation. Its function is as follows. Involved in 'Ser-type' sulfatase maturation under anaerobic conditions. Links the heparin and the chondroitin sulfate utilization pathways which contribute to the colonization of the intestinal tract. May catalyze the activation of chondro-6-sulfatase, i.e. the post-translational modification of a specific serine residue into 3-oxoalanine (also known as C(alpha)-formylglycine (FGly)), by a free radical chemical mechanism initiated via the reductive cleavage of S-adenosyl-L-methionine (SAM). Is also able to oxidize a cysteine residue in a synthetic substrate to FGly in vitro, but not in a recombinant Cys-type sulfatase in vivo. But since B.thetaiotaomicron possesses only Ser-type sulfatases, the oxidation of serine residues to FGly is the sole physiological activity. The protein is Serine-type anaerobic sulfatase-maturating enzyme (chuR) of Bacteroides thetaiotaomicron (strain ATCC 29148 / DSM 2079 / JCM 5827 / CCUG 10774 / NCTC 10582 / VPI-5482 / E50).